A 246-amino-acid polypeptide reads, in one-letter code: Probable transcriptional regulatory protein CLJ_B3338 (246 aa).

Belongs to the TACO1 family.

Its subcellular location is the cytoplasm. This is Probable transcriptional regulatory protein CLJ_B3338 from Clostridium botulinum (strain 657 / Type Ba4).